The following is a 158-amino-acid chain: SKP1-like protein 18 (158 aa).

Positions Ile-99–Asn-157 are interaction with the F-box domain of F-box proteins.

It belongs to the SKP1 family. Part of a SCF (SKP1-cullin-F-box) protein ligase complex. Interacts with CPR1/CPR30, EBF1, SKP2A, At3g61590, At4g38940 and At5g49610. Expressed in young seedlings, roots, leaves, floral stems, inflorescences, pollen, and siliques.

The protein resides in the nucleus. Its pathway is protein modification; protein ubiquitination. Its function is as follows. Involved in ubiquitination and subsequent proteasomal degradation of target proteins. Together with CUL1, RBX1 and a F-box protein, it forms a SCF E3 ubiquitin ligase complex. The functional specificity of this complex depends on the type of F-box protein. In the SCF complex, it serves as an adapter that links the F-box protein to CUL1. The protein is SKP1-like protein 18 (ASK18) of Arabidopsis thaliana (Mouse-ear cress).